Consider the following 308-residue polypeptide: 3'(2'),5'-bisphosphate nucleotidase 1 (308 aa).

N-acetylalanine is present on alanine 2. Aspartate 51 (proton acceptor) is an active-site residue. Positions 74, 117, 119, and 120 each coordinate Mg(2+). Threonine 122 (proton acceptor) is an active-site residue. Threonine 122 is subject to Phosphothreonine. AMP-binding residues include threonine 195, histidine 198, glycine 220, and lysine 224. Serine 240 carries the phosphoserine modification. At lysine 244 the chain carries N6-succinyllysine. Residue aspartate 247 participates in Mg(2+) binding.

The protein belongs to the inositol monophosphatase superfamily. Mg(2+) serves as cofactor. In terms of tissue distribution, highly expressed in heart, brain, spleen, lung, liver, skeletal muscle, kidney and testis.

The enzyme catalyses adenosine 3',5'-bisphosphate + H2O = AMP + phosphate. It carries out the reaction adenosine 2',5'-bisphosphate + H2O = AMP + phosphate. It catalyses the reaction 3'-phosphoadenylyl sulfate + H2O = adenosine 5'-phosphosulfate + phosphate. The catalysed reaction is 1D-myo-inositol 1,4-bisphosphate + H2O = 1D-myo-inositol 4-phosphate + phosphate. The enzyme catalyses 1D-myo-inositol 1,3,4-trisphosphate + H2O = 1D-myo-inositol 3,4-bisphosphate + phosphate. Inhibited by Li(+) and Ca(2+), but not by Na(+). Phosphatase that converts 3'(2')-phosphoadenosine 5'-phosphate (PAP) to AMP and adenosine 3'-phosphate 5'-phosphosulfate (PAPS) to adenosine 5'-phosphosulfate (APS). Is also able to hydrolyze inositol 1,4-bisphosphate (Ins(1,4)P2) and inositol 1,3,4-trisphosphate (Ins(1,3,4)P3), but is not active on AMP, 3'-AMP, fructose-1,6-bisphosphate, Ins(1)P, Ins(2)P and Ins(1,4,5)P3. Probably prevents the toxic accumulation of PAP, a compound which inhibits a variety of proteins, including PAPS-utilizing enzymes such as sulfotransferases, and RNA processing enzymes. Could also play a role in inositol recycling and phosphoinositide metabolism. The protein is 3'(2'),5'-bisphosphate nucleotidase 1 (Bpnt1) of Rattus norvegicus (Rat).